Reading from the N-terminus, the 128-residue chain is Small ribosomal subunit protein uS11 (128 aa).

Belongs to the universal ribosomal protein uS11 family. As to quaternary structure, part of the 30S ribosomal subunit. Interacts with proteins S7 and S18. Binds to IF-3.

Functionally, located on the platform of the 30S subunit, it bridges several disparate RNA helices of the 16S rRNA. Forms part of the Shine-Dalgarno cleft in the 70S ribosome. The sequence is that of Small ribosomal subunit protein uS11 from Desulfatibacillum aliphaticivorans.